Consider the following 557-residue polypeptide: Low affinity inorganic phosphate transporter 8 (557 aa).

Over 1 to 20 (MATSHGVLRSLDNAKTQSYH) the chain is Cytoplasmic. The helical transmembrane segment at 21–41 (YLAIVIAGMGFFTDAYDLFCI) threads the bilayer. Residues 42–70 (TAVTKLIGRLYYSDPTNHSPGILPTNVNN) are Extracellular-facing. A helical transmembrane segment spans residues 71–91 (AITGVALCGTLAGQLFFGWLG). Residues 92 to 98 (DKLGRKK) are Cytoplasmic-facing. A helical transmembrane segment spans residues 99 to 119 (VYGITLTTMVGFALLSGLSFG). Over 120–130 (STPKTVVTSLC) the chain is Extracellular. Residues 131–151 (FFRFWLGFGIGGDYPLSAVIM) traverse the membrane as a helical segment. Residues 152-162 (SEYANQKTRGS) are Cytoplasmic-facing. A helical membrane pass occupies residues 163–183 (FIAAVFAMQGVGILVAGGVAM). Over 184–210 (FVSKLFLLYFPAPDFETDAVLSTQPEG) the chain is Extracellular. The helical transmembrane segment at 211–231 (DFVWRIVLMFGAVPAALTYYW) threads the bilayer. Residues 232–294 (RMKMPETARY…LFSSEFLNRH (63 aa)) lie on the Cytoplasmic side of the membrane. The helical transmembrane segment at 295 to 315 (GLHLLGTTSTWFLLDIAFYSL) threads the bilayer. The Extracellular segment spans residues 316 to 346 (QLTQKDIYPTSGLVYKASKMNAIEEVFQLSR). Residues 347–367 (AMFAVALIATVPGYWCTVFLI) form a helical membrane-spanning segment. Over 368–369 (EK) the chain is Cytoplasmic. The helical transmembrane segment at 370–390 (IGRFRIQLIGFLVMSVCMWFL) threads the bilayer. The Extracellular segment spans residues 391-414 (GHNYRSFRGEESACKNGSKYSFCN). Asn406 carries an N-linked (GlcNAc...) asparagine glycan. The chain crosses the membrane as a helical span at residues 415-435 (GNPVMFAILFGLTLFFANFGP). The Cytoplasmic portion of the chain corresponds to 436 to 457 (NSTTFIVPAELFPARLRSTCHG). A helical membrane pass occupies residues 458 to 478 (ISAAAGKSGAIVGAFGVQSYI). The Extracellular segment spans residues 479-490 (GNSHDKSKGTKQ). Residues 491–511 (AIMALAVVNLLGFFFTFLVPE) traverse the membrane as a helical segment. The Cytoplasmic portion of the chain corresponds to 512-557 (TQGRSLEEISGEEKDFQGNNADEEISGERNGTRNASVDKSPETSMV). A disordered region spans residues 519–557 (EISGEEKDFQGNNADEEISGERNGTRNASVDKSPETSMV). A compositionally biased stretch (polar residues) spans 543 to 557 (TRNASVDKSPETSMV).

It belongs to the major facilitator superfamily. Phosphate:H(+) symporter (TC 2.A.1.9) family.

It is found in the cell membrane. The enzyme catalyses phosphate(in) + H(+)(in) = phosphate(out) + H(+)(out). Functionally, low-affinity transporter for external inorganic phosphate (Pi) that may be involved in the acquisition of phosphate released by arbuscular mycorrhizal (AM) fungi (e.g. Glomus versiforme and G.intraradices) during AM symbiosis; not required for mycorrhizal arbuscule development. This is Low affinity inorganic phosphate transporter 8 from Medicago truncatula (Barrel medic).